The primary structure comprises 346 residues: Sugar utilization regulatory protein IMP2 (346 aa).

Residues methionine 1–glutamate 29 show a composition bias toward polar residues. Disordered stretches follow at residues methionine 1–glutamate 74 and leucine 91–asparagine 132. Threonine 24 bears the Phosphothreonine mark. Positions arginine 40–arginine 49 are enriched in basic residues. Residues valine 96–asparagine 132 are compositionally biased toward acidic residues.

In terms of biological role, controls the nucleo-mitochondrial dependence of galactose, maltose and raffinose utilization. Becomes essential in the absence of functioning mitochondria. The chain is Sugar utilization regulatory protein IMP2 (IMP2') from Saccharomyces cerevisiae (strain ATCC 204508 / S288c) (Baker's yeast).